We begin with the raw amino-acid sequence, 848 residues long: Mitochondrial escape protein 2 (848 aa).

A mitochondrion-targeting transit peptide spans 1–42; that stretch reads MNSITTPRMGATILRTIAPNVGVLSQVLPLGLRRVYPRGVRW. Residues 43 to 284 lie on the Mitochondrial matrix side of the membrane; that stretch reads VSSEIQQKDR…IRNFYVTHTR (242 aa). The RRM domain maps to 196-269; it reads TTVIIKCQGP…TVLHLQYENV (74 aa). A helical transmembrane segment spans residues 285 to 305; the sequence is IAIPVTFALLSILAVLIFDPI. The Mitochondrial intermembrane portion of the chain corresponds to 306-848; that stretch reads REFFIEQKIT…LSQESNNRRK (543 aa). Residues 603 to 627 form a disordered region; it reads RAKKAEEDEPTEKASPEHSQYDEND. Residues 613 to 627 show a composition bias toward basic and acidic residues; the sequence is TEKASPEHSQYDEND.

Belongs to the YME2 family.

Its subcellular location is the mitochondrion inner membrane. Plays a role in maintaining the mitochondrial genome and in controlling the mtDNA escape. Involved in the regulation of mtDNA nucleotide structure and number. May have a dispensable role in early maturation of pre-rRNA. This Candida glabrata (strain ATCC 2001 / BCRC 20586 / JCM 3761 / NBRC 0622 / NRRL Y-65 / CBS 138) (Yeast) protein is Mitochondrial escape protein 2 (YME2).